A 612-amino-acid polypeptide reads, in one-letter code: 2-isopropylmalate synthase B (612 aa).

Positions 71 to 344 (VRIFDTTLRD…YTGINTQHIL (274 aa)) constitute a Pyruvate carboxyltransferase domain. Residues aspartate 80, histidine 277, and asparagine 313 each contribute to the a divalent metal cation site.

This sequence belongs to the alpha-IPM synthase/homocitrate synthase family. LeuA type 1 subfamily. Homodimer. It depends on a divalent metal cation as a cofactor.

The catalysed reaction is 3-methyl-2-oxobutanoate + acetyl-CoA + H2O = (2S)-2-isopropylmalate + CoA + H(+). It participates in amino-acid biosynthesis; L-leucine biosynthesis; L-leucine from 3-methyl-2-oxobutanoate: step 1/4. Its function is as follows. Catalyzes the condensation of the acetyl group of acetyl-CoA with 3-methyl-2-oxobutanoate (2-oxoisovalerate) to form 3-carboxy-3-hydroxy-4-methylpentanoate (2-isopropylmalate). This chain is 2-isopropylmalate synthase B (IPMSB), found in Solanum pennellii (Tomato).